A 726-amino-acid chain; its full sequence is Quinolinate synthase, chloroplastic (726 aa).

Residues Met1–Thr67 constitute a chloroplast transit peptide. The Cysteine persulfide intermediate role is filled by Cys133. Positions 283 and 309 each coordinate iminosuccinate. Residue Cys363 participates in [4Fe-4S] cluster binding. Residues Tyr392–Asn394 and Ser414 contribute to the iminosuccinate site. Residue Cys487 coordinates [4Fe-4S] cluster. Residues His513–Glu515 and Thr538 contribute to the iminosuccinate site. Cys643 contacts [4Fe-4S] cluster.

The protein belongs to the quinolinate synthase family. Type 1 subfamily. In terms of assembly, homodimer. [4Fe-4S] cluster serves as cofactor.

It is found in the plastid. The protein resides in the chloroplast. It carries out the reaction iminosuccinate + dihydroxyacetone phosphate = quinolinate + phosphate + 2 H2O + H(+). Its pathway is alkaloid biosynthesis; nicotine biosynthesis. It participates in cofactor biosynthesis; NAD(+) biosynthesis; quinolinate from iminoaspartate: step 1/1. Functionally, involved in the biosynthesis of pyridine alkaloid natural products, leading mainly to the production of anabasine, anatabine, nicotine and nornicotine, effective deterrents against herbivores with antiparasitic and pesticide properties (neurotoxins); nornicotine serves as the precursor in the synthesis of the carcinogen compound N'-nitrosonornicotine (NNN). Catalyzes the condensation of iminoaspartate with dihydroxyacetone phosphate to form quinolinate. This Nicotiana tabacum (Common tobacco) protein is Quinolinate synthase, chloroplastic.